The primary structure comprises 109 residues: Parvalbumin beta (109 aa).

An N-acetylalanine modification is found at alanine 2. EF-hand domains are found at residues 39 to 74 (KSAD…FKAG) and 78 to 109 (LSDA…MIKG). Ca(2+) is bound by residues aspartate 52, aspartate 54, serine 56, tyrosine 58, glutamate 60, glutamate 63, aspartate 91, aspartate 93, aspartate 95, lysine 97, and glutamate 102.

Belongs to the parvalbumin family. Post-translationally, the N-terminus is blocked.

Its function is as follows. In muscle, parvalbumin is thought to be involved in relaxation after contraction. It binds two calcium ions. In Scomber scombrus (Atlantic mackerel), this protein is Parvalbumin beta.